Here is a 154-residue protein sequence, read N- to C-terminus: Endoribonuclease YbeY (154 aa).

Residues H117, H121, and H127 each contribute to the Zn(2+) site.

Belongs to the endoribonuclease YbeY family. Zn(2+) is required as a cofactor.

The protein resides in the cytoplasm. Its function is as follows. Single strand-specific metallo-endoribonuclease involved in late-stage 70S ribosome quality control and in maturation of the 3' terminus of the 16S rRNA. The sequence is that of Endoribonuclease YbeY from Polaromonas sp. (strain JS666 / ATCC BAA-500).